The following is a 359-amino-acid chain: Fructose-bisphosphate aldolase (359 aa).

Serine 50 is a binding site for D-glyceraldehyde 3-phosphate. The active-site Proton donor is aspartate 83. The Zn(2+) site is built by histidine 84, aspartate 105, glutamate 142, and histidine 198. Glycine 199 contacts dihydroxyacetone phosphate. A Zn(2+)-binding site is contributed by histidine 232. Residues 233–235 (GSS) and 275–278 (NIDT) contribute to the dihydroxyacetone phosphate site.

Belongs to the class II fructose-bisphosphate aldolase family. The cofactor is Zn(2+).

The catalysed reaction is beta-D-fructose 1,6-bisphosphate = D-glyceraldehyde 3-phosphate + dihydroxyacetone phosphate. It functions in the pathway carbohydrate degradation; glycolysis; D-glyceraldehyde 3-phosphate and glycerone phosphate from D-glucose: step 4/4. Functionally, catalyzes the aldol condensation of dihydroxyacetone phosphate (DHAP or glycerone-phosphate) with glyceraldehyde 3-phosphate (G3P) to form fructose 1,6-bisphosphate (FBP) in gluconeogenesis and the reverse reaction in glycolysis. This chain is Fructose-bisphosphate aldolase (fba), found in Nostoc commune.